A 692-amino-acid polypeptide reads, in one-letter code: uncharacterized protein (692 aa).

2 consecutive Response regulatory domains span residues 9 to 130 (RVLY…LRMC) and 139 to 255 (RILI…EYRM). A 4-aspartylphosphate mark is found at Asp58 and Asp188. Residues 299 to 432 (GVHGLVIIDV…GGNQAHVWSA (134 aa)) enclose the GGDEF domain. The EAL domain maps to 443-691 (ESVIKRLVST…SFDFQHMSHD (249 aa)).

This is an uncharacterized protein from Thiocystis violacea.